Here is a 564-residue protein sequence, read N- to C-terminus: Nucleolus and neural progenitor protein (564 aa).

Positions Gly-431–Arg-495 are disordered. Positions Arg-442–Arg-459 are enriched in basic residues. Residues Arg-442–Lys-460 are nuclear localization signal. Positions Lys-460–Pro-473 are enriched in polar residues.

Belongs to the nepro family.

It is found in the nucleus. The protein localises to the nucleolus. Functionally, may play a role in cortex development as part of the Notch signaling pathway. Downstream of Notch may repress the expression of proneural genes and inhibit neuronal differentiation thereby maintaining neural progenitors. May also play a role in preimplentation embryo development. In Mus musculus (Mouse), this protein is Nucleolus and neural progenitor protein.